The chain runs to 185 residues: Ribosome-recycling factor (185 aa).

Belongs to the RRF family.

Its subcellular location is the cytoplasm. Its function is as follows. Responsible for the release of ribosomes from messenger RNA at the termination of protein biosynthesis. May increase the efficiency of translation by recycling ribosomes from one round of translation to another. The chain is Ribosome-recycling factor from Shouchella clausii (strain KSM-K16) (Alkalihalobacillus clausii).